Reading from the N-terminus, the 519-residue chain is Protein disulfide-isomerase A5 (519 aa).

The N-terminal stretch at 1–21 is a signal peptide; it reads MARAGPAWLLLAIWVVLPSWL. Intrachain disulfides connect Cys-85/Cys-94, Cys-182/Cys-185, Cys-305/Cys-308, and Cys-426/Cys-429. 3 Thioredoxin domains span residues 134–261, 270–384, and 378–506; these read FLKD…NPQP, PWAD…NPEA, and WMQN…ALRE. The short motif at 516 to 519 is the Prevents secretion from ER element; sequence KEEL.

It belongs to the protein disulfide isomerase family. In terms of assembly, interacts with CALR (via P-domain).

The protein resides in the endoplasmic reticulum lumen. The enzyme catalyses Catalyzes the rearrangement of -S-S- bonds in proteins.. This Homo sapiens (Human) protein is Protein disulfide-isomerase A5 (PDIA5).